A 160-amino-acid chain; its full sequence is SsrA-binding protein (160 aa).

The tract at residues K136–D160 is disordered.

This sequence belongs to the SmpB family.

The protein localises to the cytoplasm. Required for rescue of stalled ribosomes mediated by trans-translation. Binds to transfer-messenger RNA (tmRNA), required for stable association of tmRNA with ribosomes. tmRNA and SmpB together mimic tRNA shape, replacing the anticodon stem-loop with SmpB. tmRNA is encoded by the ssrA gene; the 2 termini fold to resemble tRNA(Ala) and it encodes a 'tag peptide', a short internal open reading frame. During trans-translation Ala-aminoacylated tmRNA acts like a tRNA, entering the A-site of stalled ribosomes, displacing the stalled mRNA. The ribosome then switches to translate the ORF on the tmRNA; the nascent peptide is terminated with the 'tag peptide' encoded by the tmRNA and targeted for degradation. The ribosome is freed to recommence translation, which seems to be the essential function of trans-translation. The polypeptide is SsrA-binding protein (Ectopseudomonas mendocina (strain ymp) (Pseudomonas mendocina)).